A 204-amino-acid polypeptide reads, in one-letter code: SOSS complex subunit B homolog (204 aa).

Positions 24–94 form a DNA-binding region, OB; sequence IVLEVGVATV…TLYSGKNGEV (71 aa). A disordered region spans residues 115 to 204; the sequence is RAEQQAVANP…GRGGLKGERR (90 aa). Composition is skewed to low complexity over residues 122-131 and 139-183; these read ANPAATPAGL and GLPA…QTTT. Gly residues predominate over residues 187 to 198; that stretch reads TRGGRGGGGRGG.

Belongs to the SOSS-B family.

This is SOSS complex subunit B homolog from Drosophila melanogaster (Fruit fly).